The sequence spans 828 residues: Periplasmic nitrate reductase (828 aa).

The segment at residues 1–31 (MKLSRRHFMKANAVAAAAAVAGITIPIAVRA) is a signal peptide (tat-type signal). The 4Fe-4S Mo/W bis-MGD-type domain occupies 39–95 (IHWDKAPCRFCGVGCGVLVGTQNGRIVASQGDPEAPVNRGLNCIKGYFLPKIMYGQD). Residues cysteine 46, cysteine 49, cysteine 53, and cysteine 81 each coordinate [4Fe-4S] cluster. Residues lysine 83, glutamine 150, asparagine 175, cysteine 179, 212-219 (WGSNMAEM), 243-247 (STYQH), 262-264 (QTD), methionine 372, glutamine 376, asparagine 482, 508-509 (SD), lysine 531, aspartate 558, and 718-727 (TGRVLEHWHT) contribute to the Mo-bis(molybdopterin guanine dinucleotide) site. Phenylalanine 794 contacts substrate. Residues asparagine 802 and lysine 819 each contribute to the Mo-bis(molybdopterin guanine dinucleotide) site.

The protein belongs to the prokaryotic molybdopterin-containing oxidoreductase family. NasA/NapA/NarB subfamily. As to quaternary structure, component of the periplasmic nitrate reductase NapAB complex composed of NapA and NapB. The cofactor is [4Fe-4S] cluster. Requires Mo-bis(molybdopterin guanine dinucleotide) as cofactor. Predicted to be exported by the Tat system. The position of the signal peptide cleavage has not been experimentally proven.

Its subcellular location is the periplasm. The catalysed reaction is 2 Fe(II)-[cytochrome] + nitrate + 2 H(+) = 2 Fe(III)-[cytochrome] + nitrite + H2O. Its function is as follows. Catalytic subunit of the periplasmic nitrate reductase complex NapAB. Receives electrons from NapB and catalyzes the reduction of nitrate to nitrite. The protein is Periplasmic nitrate reductase of Pectobacterium atrosepticum (strain SCRI 1043 / ATCC BAA-672) (Erwinia carotovora subsp. atroseptica).